The sequence spans 1181 residues: WD repeat-containing protein 35 (1181 aa).

5 WD repeats span residues 12 to 51, 69 to 108, 113 to 152, 154 to 193, and 502 to 539; these read PNNV…DDSK, GHSG…WYEE, RNKS…IWGK, LKGI…IMKM, and GTRD…LIQK.

Component of the IFT complex A (IFT-A) complex. IFT-A complex is divided into a core subcomplex composed of IFT122:IFT140:WDR19 which is associated with TULP3 and a peripheral subcomplex composed of IFT43:WDR35:TTC21B. Interacts directy with IFT122, ITF43 and TTC21B. Interacts with IFT43. Interacts with CFAP61.

Its subcellular location is the cytoplasm. The protein resides in the cytoskeleton. It is found in the microtubule organizing center. It localises to the centrosome. The protein localises to the cilium axoneme. Its subcellular location is the cilium basal body. Its function is as follows. As a component of the IFT complex A (IFT-A), a complex required for retrograde ciliary transport and entry into cilia of G protein-coupled receptors (GPCRs), it is involved in ciliogenesis and ciliary protein trafficking. May promote CASP3 activation and TNF-stimulated apoptosis. This chain is WD repeat-containing protein 35, found in Mus musculus (Mouse).